A 275-amino-acid chain; its full sequence is Translation initiation factor 2 subunit alpha (275 aa).

The S1 motif domain occupies 12 to 83 (GEFVVATVKR…RKGHIDLSLR (72 aa)).

This sequence belongs to the eIF-2-alpha family. As to quaternary structure, heterotrimer composed of an alpha, a beta and a gamma chain.

In terms of biological role, eIF-2 functions in the early steps of protein synthesis by forming a ternary complex with GTP and initiator tRNA. This is Translation initiation factor 2 subunit alpha (eif2a) from Pyrococcus abyssi (strain GE5 / Orsay).